The primary structure comprises 405 residues: Transcriptional regulatory protein DEP1 (405 aa).

Low complexity predominate over residues 1-12 (MSQQTPQESEQT). Disordered regions lie at residues 1-26 (MSQQ…SVLS) and 49-171 (AGTE…VMPS). At Ser56 the chain carries Phosphoserine. Composition is skewed to basic and acidic residues over residues 86-108 (SLKR…KVPG) and 116-139 (EEEK…ARDE). Ser120 carries the phosphoserine modification. Over residues 140–157 (QGDEGDNEEENNEEDNEN) the composition is skewed to acidic residues. Ser370 carries the phosphoserine modification.

Component of the RPD3C(L) complex composed of at least ASH1, CTI6, DEP1, PHO23, RPD3, RXT2, RXT3, SAP30, SDS3, SIN3, UME1 and UME6.

Its subcellular location is the cytoplasm. It is found in the nucleus. Component of the RPD3C(L) histone deacetylase complex (HDAC) responsible for the deacetylation of lysine residues on the N-terminal part of the core histones (H2A, H2B, H3 and H4). Histone deacetylation gives a tag for epigenetic repression and plays an important role in transcriptional regulation, cell cycle progression and developmental events. The chain is Transcriptional regulatory protein DEP1 (DEP1) from Saccharomyces cerevisiae (strain ATCC 204508 / S288c) (Baker's yeast).